We begin with the raw amino-acid sequence, 22 residues long: SNKKDYQKEIVDKHNALRRSVK.

Residues 1–15 (SNKKDYQKEIVDKHN) show a composition bias toward basic and acidic residues. The disordered stretch occupies residues 1-22 (SNKKDYQKEIVDKHNALRRSVK).

This sequence belongs to the CRISP family. In terms of processing, contains 8 disulfide bonds. In terms of tissue distribution, expressed by the venom gland.

It localises to the secreted. The sequence is that of Cysteine-rich venom protein notescatin from Notechis scutatus scutatus (Mainland tiger snake).